Here is a 278-residue protein sequence, read N- to C-terminus: Chitosanase (278 aa).

The signal sequence occupies residues 1–40 (MHSQHRTARIALAVVLTAIPASLATAGVGYASTQASTAVK). Residue glutamate 62 is the Proton donor of the active site. Catalysis depends on aspartate 80, which acts as the Nucleophile.

Belongs to the glycosyl hydrolase 46 family.

It localises to the secreted. The catalysed reaction is Endohydrolysis of beta-(1-&gt;4)-linkages between D-glucosamine residues in a partly acetylated chitosan.. In terms of biological role, aids in the defense against invading fungal pathogens by degrading their cell wall chitosan. This Streptomyces sp. (strain N174) protein is Chitosanase (csn).